The following is a 784-amino-acid chain: Lon protease (784 aa).

The 202-residue stretch at Leu6–Ile207 folds into the Lon N-terminal domain. Position 356–363 (Gly356–Thr363) interacts with ATP. The Lon proteolytic domain maps to Glu592 to Glu773. Residues Ser679 and Lys722 contribute to the active site.

This sequence belongs to the peptidase S16 family. Homohexamer. Organized in a ring with a central cavity.

The protein localises to the cytoplasm. It catalyses the reaction Hydrolysis of proteins in presence of ATP.. ATP-dependent serine protease that mediates the selective degradation of mutant and abnormal proteins as well as certain short-lived regulatory proteins. Required for cellular homeostasis and for survival from DNA damage and developmental changes induced by stress. Degrades polypeptides processively to yield small peptide fragments that are 5 to 10 amino acids long. Binds to DNA in a double-stranded, site-specific manner. The sequence is that of Lon protease from Rickettsia prowazekii (strain Madrid E).